A 208-amino-acid polypeptide reads, in one-letter code: Riboflavin synthase (208 aa).

2 Lumazine-binding repeats span residues 1-97 (MFTG…MGGH) and 98-195 (IISG…VDTT). 2,4-dihydroxypteridine-binding positions include 4-6 (GIV), 48-50 (CLT), 62-67 (DIMKIT), 101-103 (GHI), Lys-137, 146-148 (SLT), and 160-165 (SIIPET).

Homotrimer.

The catalysed reaction is 2 6,7-dimethyl-8-(1-D-ribityl)lumazine + H(+) = 5-amino-6-(D-ribitylamino)uracil + riboflavin. It participates in cofactor biosynthesis; riboflavin biosynthesis; riboflavin from 2-hydroxy-3-oxobutyl phosphate and 5-amino-6-(D-ribitylamino)uracil: step 2/2. Functionally, catalyzes the dismutation of two molecules of 6,7-dimethyl-8-ribityllumazine, resulting in the formation of riboflavin and 5-amino-6-(D-ribitylamino)uracil. The chain is Riboflavin synthase (ribE) from Buchnera aphidicola subsp. Schizaphis graminum (strain Sg).